The chain runs to 255 residues: tRNA (guanine-N(1)-)-methyltransferase (255 aa).

Residues G113 and I133–L138 contribute to the S-adenosyl-L-methionine site.

This sequence belongs to the RNA methyltransferase TrmD family. As to quaternary structure, homodimer.

The protein localises to the cytoplasm. The enzyme catalyses guanosine(37) in tRNA + S-adenosyl-L-methionine = N(1)-methylguanosine(37) in tRNA + S-adenosyl-L-homocysteine + H(+). Functionally, specifically methylates guanosine-37 in various tRNAs. This chain is tRNA (guanine-N(1)-)-methyltransferase, found in Enterobacter sp. (strain 638).